The following is a 96-amino-acid chain: Large ribosomal subunit protein bL27 (96 aa).

Positions 1-11 (MLKTLENLQLF) are excised as a propeptide. Positions 13–36 (HKKGGGSTSNGRDSQAKRLGAKAA) are disordered.

It belongs to the bacterial ribosomal protein bL27 family. In terms of processing, the N-terminus is cleaved by ribosomal processing cysteine protease Prp.

This is Large ribosomal subunit protein bL27 from Streptococcus thermophilus (strain CNRZ 1066).